The following is a 336-amino-acid chain: Dihydroorotate dehydrogenase (quinone) (336 aa).

Residues 62-66 (AGLDK) and threonine 86 each bind FMN. Lysine 66 is a binding site for substrate. 111-115 (NRMGF) contributes to the substrate binding site. Residues asparagine 139 and asparagine 172 each coordinate FMN. Asparagine 172 contributes to the substrate binding site. Serine 175 acts as the Nucleophile in catalysis. Asparagine 177 contacts substrate. Residues lysine 217 and threonine 245 each coordinate FMN. Residue 246 to 247 (NT) coordinates substrate. FMN is bound by residues glycine 268, glycine 297, and 318–319 (YS).

Belongs to the dihydroorotate dehydrogenase family. Type 2 subfamily. Monomer. It depends on FMN as a cofactor.

The protein resides in the cell membrane. The enzyme catalyses (S)-dihydroorotate + a quinone = orotate + a quinol. Its pathway is pyrimidine metabolism; UMP biosynthesis via de novo pathway; orotate from (S)-dihydroorotate (quinone route): step 1/1. Catalyzes the conversion of dihydroorotate to orotate with quinone as electron acceptor. This is Dihydroorotate dehydrogenase (quinone) from Klebsiella pneumoniae (strain 342).